The chain runs to 381 residues: Glycerate 2-kinase (381 aa).

The protein belongs to the glycerate kinase type-1 family.

It carries out the reaction (R)-glycerate + ATP = (2R)-2-phosphoglycerate + ADP + H(+). Functionally, catalyzes the transfer of the phosphate group from adenosine triphosphate (ATP) to (R)-glycerate to form (2R)-2-phosphoglycerate, an enzymatic step in (L)-glucarate/galactarate catabolic pathway. The sequence is that of Glycerate 2-kinase (garK) from Escherichia coli (strain K12).